A 1020-amino-acid polypeptide reads, in one-letter code: 26S proteasome non-ATPase regulatory subunit 1 (1020 aa).

The disordered stretch occupies residues 279–322 (TALPSTFKPQGTTSEDGAKSEGDKSKSDEDITEETPADDKVERT). Positions 281 to 293 (LPSTFKPQGTTSE) are enriched in polar residues. Residue Thr-291 is modified to Phosphothreonine. A compositionally biased stretch (basic and acidic residues) spans 294 to 307 (DGAKSEGDKSKSDE). A phosphoserine mark is found at Ser-298, Ser-303, and Ser-305. Thr-310 carries the post-translational modification Phosphothreonine. PC repeat units lie at residues 418 to 452 (TATASLGVIHRGHEKDSLALMQSYLPKEAGPSSGY), 456 to 489 (GALYALGLIHANHGANIIDYLLQQLKDAQNENVR), 491 to 525 (GGCLGLGLAGMGTHRQDLYEQLKFNLYQDDAVTGE), 526 to 560 (AAGIAMGMVMLGSKNAQAIEDMVSYAQETQHEKIL), 562 to 595 (GLAVGISLTMFSRLEEADPLVTSLSSDKDPVLRR), 596 to 631 (SGMYTIAMAYNGTGSNKAIRKLLHVAVSDVNDDVRR), 632 to 664 (AAVTAIGFILFRSPEQCPSVVSLLAESYNPHVR), 666 to 701 (GAAMALGIACAGTGLREAIALLEPMVKFDPVNFVRQ), 702 to 742 (GALI…DVMA), and 745 to 777 (GAILAQGIIDAGGRNATLSLQSRTGHTNLQAVV). Disordered regions lie at residues 855–950 (QKRR…NPAR) and 999–1020 (FGPMNDEEKEPEPPEPFEYIED). 2 stretches are compositionally biased toward basic and acidic residues: residues 858-867 (RENADKKEDE) and 876-939 (KEGA…KEPE). Acidic residues predominate over residues 1003 to 1020 (NDEEKEPEPPEPFEYIED).

This sequence belongs to the proteasome subunit S1 family.

In terms of biological role, acts as a regulatory subunit of the 26S proteasome which is involved in the ATP-dependent degradation of ubiquitinated proteins. The polypeptide is 26S proteasome non-ATPase regulatory subunit 1 (Rpn2) (Drosophila melanogaster (Fruit fly)).